The primary structure comprises 132 residues: Small ribosomal subunit protein bS6 (132 aa).

The segment at 94–132 (DAVTEESQLAKNADEKRARKATTRRPDRDDSDDNDHSED) is disordered. Positions 122–132 (DDSDDNDHSED) are enriched in acidic residues.

It belongs to the bacterial ribosomal protein bS6 family.

Binds together with bS18 to 16S ribosomal RNA. The polypeptide is Small ribosomal subunit protein bS6 (Psychrobacter arcticus (strain DSM 17307 / VKM B-2377 / 273-4)).